The primary structure comprises 130 residues: Trypsin inhibitor (130 aa).

The segment at 27–49 (LHKQARQSGSGPSPQGPQQRPPL) is disordered. Over residues 32–49 (RQSGSGPSPQGPQQRPPL) the composition is skewed to low complexity.

The protein belongs to the 2S seed storage albumins family. The protein consists of two chains linked by disulfide bonds.

Its function is as follows. Inhibits trypsin with a Ki of 7 x 10(-6) M. In Mutarda arvensis (Charlock mustard), this protein is Trypsin inhibitor.